The chain runs to 561 residues: Probable galacturonosyltransferase 9 (561 aa).

Over 1-27 (MAVAFRGGRGGVGSGQSTGLRSFFSYR) the chain is Cytoplasmic. A helical; Signal-anchor for type II membrane protein membrane pass occupies residues 28–48 (IFISALFSFLFLATFSVVLNS). Residues 49–561 (SRHQPHQDHT…EFVQMCNFGL (513 aa)) are Lumenal-facing. N-linked (GlcNAc...) asparagine glycosylation is found at Asn-124, Asn-320, Asn-346, and Asn-426.

The protein belongs to the glycosyltransferase 8 family. As to expression, expressed in roots, inflorescences, siliques, leaves and stems.

It localises to the golgi apparatus membrane. The protein operates within glycan metabolism; pectin biosynthesis. Its function is as follows. May be involved in pectin synthesis. The sequence is that of Probable galacturonosyltransferase 9 (GAUT9) from Arabidopsis thaliana (Mouse-ear cress).